The primary structure comprises 314 residues: DNA-directed RNA polymerase subunit alpha (314 aa).

Positions 1–228 are alpha N-terminal domain (alpha-NTD); the sequence is MIEFEKPKIH…EHLAIFVNLN (228 aa). The tract at residues 245-314 is alpha C-terminal domain (alpha-CTD); the sequence is KEKMLEMTIE…LLGLGFRSED (70 aa).

The protein belongs to the RNA polymerase alpha chain family. In terms of assembly, homodimer. The RNAP catalytic core consists of 2 alpha, 1 beta, 1 beta' and 1 omega subunit. When a sigma factor is associated with the core the holoenzyme is formed, which can initiate transcription.

The enzyme catalyses RNA(n) + a ribonucleoside 5'-triphosphate = RNA(n+1) + diphosphate. DNA-dependent RNA polymerase catalyzes the transcription of DNA into RNA using the four ribonucleoside triphosphates as substrates. The sequence is that of DNA-directed RNA polymerase subunit alpha from Pediococcus pentosaceus (strain ATCC 25745 / CCUG 21536 / LMG 10740 / 183-1w).